The following is a 138-amino-acid chain: Large ribosomal subunit protein eL14B (138 aa).

Ser2 is modified (N-acetylserine).

This sequence belongs to the eukaryotic ribosomal protein eL14 family. In terms of assembly, component of the large ribosomal subunit (LSU). Mature yeast ribosomes consist of a small (40S) and a large (60S) subunit. The 40S small subunit contains 1 molecule of ribosomal RNA (18S rRNA) and 33 different proteins (encoded by 57 genes). The large 60S subunit contains 3 rRNA molecules (25S, 5.8S and 5S rRNA) and 46 different proteins (encoded by 81 genes). Post-translationally, N-terminally acetylated by acetyltransferase NatA.

Its subcellular location is the cytoplasm. Functionally, component of the ribosome, a large ribonucleoprotein complex responsible for the synthesis of proteins in the cell. The small ribosomal subunit (SSU) binds messenger RNAs (mRNAs) and translates the encoded message by selecting cognate aminoacyl-transfer RNA (tRNA) molecules. The large subunit (LSU) contains the ribosomal catalytic site termed the peptidyl transferase center (PTC), which catalyzes the formation of peptide bonds, thereby polymerizing the amino acids delivered by tRNAs into a polypeptide chain. The nascent polypeptides leave the ribosome through a tunnel in the LSU and interact with protein factors that function in enzymatic processing, targeting, and the membrane insertion of nascent chains at the exit of the ribosomal tunnel. In Saccharomyces cerevisiae (strain ATCC 204508 / S288c) (Baker's yeast), this protein is Large ribosomal subunit protein eL14B.